A 176-amino-acid chain; its full sequence is Cytochrome b (176 aa).

3 consecutive transmembrane segments (helical) span residues 33-53 (FGSLLGICLAVQILTGLFLAM), 77-98 (WLLRYLHANGASMFFICLYLHI), and 113-133 (WNVGVILLFAVMATAFMGYVL). Heme b-binding residues include H83 and H97.

This sequence belongs to the cytochrome b family. As to quaternary structure, the cytochrome bc1 complex contains 11 subunits: 3 respiratory subunits (MT-CYB, CYC1 and UQCRFS1), 2 core proteins (UQCRC1 and UQCRC2) and 6 low-molecular weight proteins (UQCRH/QCR6, UQCRB/QCR7, UQCRQ/QCR8, UQCR10/QCR9, UQCR11/QCR10 and a cleavage product of UQCRFS1). This cytochrome bc1 complex then forms a dimer. Heme b is required as a cofactor.

The protein resides in the mitochondrion inner membrane. In terms of biological role, component of the ubiquinol-cytochrome c reductase complex (complex III or cytochrome b-c1 complex) that is part of the mitochondrial respiratory chain. The b-c1 complex mediates electron transfer from ubiquinol to cytochrome c. Contributes to the generation of a proton gradient across the mitochondrial membrane that is then used for ATP synthesis. In Eumops glaucinus (Wagner's mastiff bat), this protein is Cytochrome b (MT-CYB).